The primary structure comprises 102 residues: Putative UPF0320 protein YMR326C (102 aa).

It belongs to the UPF0320 family.

This chain is Putative UPF0320 protein YMR326C, found in Saccharomyces cerevisiae (strain ATCC 204508 / S288c) (Baker's yeast).